A 344-amino-acid polypeptide reads, in one-letter code: Isopentenyl-diphosphate delta-isomerase (344 aa).

9–10 (RK) is a binding site for substrate. FMN is bound by residues 65–67 (AMT), serine 95, and asparagine 124. Residue glutamine 154 participates in substrate binding. Glutamate 155 contacts Mg(2+). Residues lysine 185, threonine 215, 259–261 (GVR), and 280–281 (SG) contribute to the FMN site.

The protein belongs to the IPP isomerase type 2 family. Homooctamer. Dimer of tetramers. Requires FMN as cofactor. NADPH serves as cofactor. Mg(2+) is required as a cofactor.

It is found in the cytoplasm. It catalyses the reaction isopentenyl diphosphate = dimethylallyl diphosphate. Functionally, involved in the biosynthesis of isoprenoids. Catalyzes the 1,3-allylic rearrangement of the homoallylic substrate isopentenyl (IPP) to its allylic isomer, dimethylallyl diphosphate (DMAPP). In Lacticaseibacillus casei (strain BL23) (Lactobacillus casei), this protein is Isopentenyl-diphosphate delta-isomerase.